A 993-amino-acid chain; its full sequence is MAASAFNIHKLVASHGDKGLLASALVDKLAHEQLEEQVQHQRRGLKVYIRNALDVKDSEIIRDRYGGKYDLHLTQQEQAPHGLAGALRLCELLDCLDSFPRTGLRQDLVLDFGGSWVTHYLRGHNVHCCSPCLGIRDKMRHTERLMTMRKVIVNDPDTFESRVPDFCTLPAEDCKVQAHFVISIHGGYDMGFKGLCRAMHAHGTTFLKGTMMFDGAMLFDTEGYLADLKCKWKKIKPRTYESEDQTPLLSRISDNLTTTIKDHTLIAFDFVDESTLSYVHKWENVKSFLTDQTYSYKGMTYGLERCLIQHGIMTYKIIAVPGTCPPELIRHCIWFTSLKDYVGLKIPVSQDLVEWKTVRILISTLRETEEIAMRCYSDKKNWLEQFKVILGVLSSKSSTIVINGMAMQAGERIDTSDYHYIGLAILLHTRMKYEQLGRMYDMWNSTFIRKFFASLTRPMRVFLSACVKTLFPTLRPRDEKEFLVKLSTFVTFNEVCQVDLDAEWDVISSAAFTAEMAVEDGKRLAEDRKQKAEAASQIPVDEIPDDTAESSDDTPREADTNQKSEPSSPELETLSTQTRSPITRLAQRASSMLEYSAYEAQLHDNAVSNLDRMWCMAGGDKKNNRLESNVKFVFETYHIVDPLVNVHFPTGRWLYRVPEGISYSVGFNEHGIGPKADGELYIVNADCVISNSKCLADTTLQYLAPTGTISLVDGVAGCGKTTAIKKMFNPATDVIVTANKKSALDVRQALFNCTDSKEATTFVRTADSILMNDTNEVQRVLVDEVVLLHFGQLCAVMSKLKAVRAICFGDSEQIAFCSRDASFDMRHSTIIPDETDTADTTFRSPQDVIKVVKCMASKALKKGTHSKYASWVSQSKVQRSVSSKAVASVTMVDLTEDRFYITMTQADKTALRTRARELNMSNDFIEHRIKTTHESQGVSEDHVTLVRLKTTKCDLFKAFKYCLVAVTRHKKTFRYEHVGKLDGDLIAECLARV.

The methyltransferase stretch occupies residues Arg-50–Gln-408. The region spanning His-72 to Leu-289 is the Alphavirus-like MT domain. A disordered region spans residues Ala-525–Pro-581. The segment covering Glu-542–Asp-552 has biased composition (acidic residues). Positions Asp-553 to Gln-562 are enriched in basic and acidic residues. Residues Ser-564 to Thr-576 are compositionally biased toward low complexity. Residues Ile-682–Ala-838 enclose the (+)RNA virus helicase ATP-binding domain. Residues Leu-711–Tyr-975 are ATP-dependent helicase. Residue Gly-714–Thr-721 coordinates ATP. The (+)RNA virus helicase C-terminal domain occupies Asp-839–Val-993.

The protein belongs to the bromoviridae replication protein 1a family. Interacts with RNA-directed RNA polymerase 2a.

It localises to the host endoplasmic reticulum membrane. Involved in the virus replication. Contains a helicase domain and a methyltransferase domain. The methyltransferase domain is probably involved in viral RNA capping. Involved in the formation of ER membrane spherular invaginations in which RNA replication complexes form. The chain is Replication protein 1a from Canna (Florist's daisy).